A 495-amino-acid chain; its full sequence is Internal alternative NAD(P)H-ubiquinone oxidoreductase A1, mitochondrial (495 aa).

The N-terminal 41 residues, 1 to 41 (MPWFKNLIKISKTITNQSSSYKSITPLASPLLAQFLQFTKQ), are a transit peptide targeting the mitochondrion. Residue 61 to 91 (RIVVLGSGWAGCRLMKDIDTNIYDVVCVSPR) participates in FAD binding. Residue 228-264 (LHCVVVGGGPTGVEFSGELSDFILKDVHQRYAHVKDY) coordinates NAD(+). A Microbody targeting signal motif is present at residues 486–495 (LVFGRDISRI).

Belongs to the NADH dehydrogenase family. FAD is required as a cofactor.

It is found in the mitochondrion inner membrane. Its subcellular location is the peroxisome. The enzyme catalyses a quinone + NADH + H(+) = a quinol + NAD(+). The catalysed reaction is a ubiquinone + NADH + H(+) = a ubiquinol + NAD(+). Alternative NADH-ubiquinone oxidoreductase which catalyzes the oxidation of mitochondrial NADH does not translocate protons across the inner mitochondrial membrane. This is Internal alternative NAD(P)H-ubiquinone oxidoreductase A1, mitochondrial (NDA1) from Solanum tuberosum (Potato).